Consider the following 141-residue polypeptide: HTH-type transcriptional repressor NsrR (141 aa).

An HTH rrf2-type domain is found at 2–129; the sequence is QLTSFTDYGL…DNYTLADLVE (128 aa). Residues 28–51 constitute a DNA-binding region (H-T-H motif); that stretch reads ISQVTEVYGVSRNHMVKIINQLSR. [2Fe-2S] cluster contacts are provided by C91, C96, and C102.

[2Fe-2S] cluster is required as a cofactor.

Its function is as follows. Nitric oxide-sensitive repressor of genes involved in protecting the cell against nitrosative stress. May require iron for activity. In Enterobacter sp. (strain 638), this protein is HTH-type transcriptional repressor NsrR.